The sequence spans 101 residues: MKICDVCGLPEELCVCEEIAREVQTLKVYTVRRRFGKVMTIIEGIDEHDIDIKELTKILKARCACGGTAKKGQIELQGDHKKKVKEVLADMGFSSDTIEIR.

The protein belongs to the SUI1 family.

This is Protein translation factor SUI1 homolog from Methanothermobacter thermautotrophicus (strain ATCC 29096 / DSM 1053 / JCM 10044 / NBRC 100330 / Delta H) (Methanobacterium thermoautotrophicum).